The primary structure comprises 956 residues: RNA-silencing factor ers1 (956 aa).

The protein resides in the cytoplasm. The protein localises to the cytoskeleton. It is found in the microtubule organizing center. It localises to the spindle pole body. Its function is as follows. Involved in RNAi-dependent heterochromatin formation and centromeric silencing. Required for the conversion of centromeric pre-small interfering RNA transcripts into small interfering RNAs, histone H3 'Lys9' methylation, and the recruitment of the RITS complex to centromeric sequences. In Schizosaccharomyces pombe (strain 972 / ATCC 24843) (Fission yeast), this protein is RNA-silencing factor ers1 (ers1).